Consider the following 442-residue polypeptide: Glutamate synthase large subunit-like protein (442 aa).

A disordered region spans residues 108 to 133 (LGRGATASGTSTTTGDGGMTDEERGH). Residues 109 to 121 (GRGATASGTSTTT) show a composition bias toward low complexity.

This sequence belongs to the glutamate synthase family.

This Rhizobium meliloti (strain 1021) (Ensifer meliloti) protein is Glutamate synthase large subunit-like protein (glxD).